The primary structure comprises 263 residues: 2-dehydro-3-deoxyphosphooctonate aldolase (263 aa).

The protein belongs to the KdsA family.

It localises to the cytoplasm. It catalyses the reaction D-arabinose 5-phosphate + phosphoenolpyruvate + H2O = 3-deoxy-alpha-D-manno-2-octulosonate-8-phosphate + phosphate. It functions in the pathway carbohydrate biosynthesis; 3-deoxy-D-manno-octulosonate biosynthesis; 3-deoxy-D-manno-octulosonate from D-ribulose 5-phosphate: step 2/3. It participates in bacterial outer membrane biogenesis; lipopolysaccharide biosynthesis. The protein is 2-dehydro-3-deoxyphosphooctonate aldolase of Wolinella succinogenes (strain ATCC 29543 / DSM 1740 / CCUG 13145 / JCM 31913 / LMG 7466 / NCTC 11488 / FDC 602W) (Vibrio succinogenes).